The chain runs to 348 residues: L-threonine 3-dehydrogenase (348 aa).

Cys42 contributes to the Zn(2+) binding site. Active-site charge relay system residues include Thr44 and His47. His67, Glu68, Cys97, Cys100, Cys103, and Cys111 together coordinate Zn(2+). NAD(+)-binding positions include Leu179, Glu199, Arg204, 266–268, and 291–292; these read LGL and IT.

Belongs to the zinc-containing alcohol dehydrogenase family. In terms of assembly, homotetramer. It depends on Zn(2+) as a cofactor.

It is found in the cytoplasm. It catalyses the reaction L-threonine + NAD(+) = (2S)-2-amino-3-oxobutanoate + NADH + H(+). Its pathway is amino-acid degradation; L-threonine degradation via oxydo-reductase pathway; glycine from L-threonine: step 1/2. In terms of biological role, catalyzes the NAD(+)-dependent oxidation of L-threonine to 2-amino-3-ketobutyrate. To a lesser extent, also catalyzes the oxidation of L-serine, D-threonine, butan-2,3-diol, butan-1,2-diol, and propan-1,2-diol and cannot oxidize other L-amino acids. Cannot utilize NADP(H) instead of NAD(H). The chain is L-threonine 3-dehydrogenase from Pyrococcus furiosus (strain ATCC 43587 / DSM 3638 / JCM 8422 / Vc1).